The primary structure comprises 435 residues: Glutamyl-tRNA reductase (435 aa).

Substrate is bound by residues 49-52 (TCNR), serine 109, 114-116 (EGQ), and glutamine 120. The active-site Nucleophile is the cysteine 50. 198–203 (GAGRMS) contacts NADP(+).

Belongs to the glutamyl-tRNA reductase family. As to quaternary structure, homodimer.

It catalyses the reaction (S)-4-amino-5-oxopentanoate + tRNA(Glu) + NADP(+) = L-glutamyl-tRNA(Glu) + NADPH + H(+). The protein operates within porphyrin-containing compound metabolism; protoporphyrin-IX biosynthesis; 5-aminolevulinate from L-glutamyl-tRNA(Glu): step 1/2. It functions in the pathway porphyrin-containing compound metabolism; chlorophyll biosynthesis. Functionally, catalyzes the NADPH-dependent reduction of glutamyl-tRNA(Glu) to glutamate 1-semialdehyde (GSA). In Prochlorococcus marinus (strain MIT 9515), this protein is Glutamyl-tRNA reductase.